We begin with the raw amino-acid sequence, 137 residues long: Peptide methionine sulfoxide reductase MsrB (137 aa).

The 123-residue stretch at 7–129 folds into the MsrB domain; the sequence is AEELKKKLSE…NSASLAFSDE (123 aa). C46, C49, C95, and C98 together coordinate Zn(2+). C118 acts as the Nucleophile in catalysis.

It belongs to the MsrB Met sulfoxide reductase family. The cofactor is Zn(2+).

It catalyses the reaction L-methionyl-[protein] + [thioredoxin]-disulfide + H2O = L-methionyl-(R)-S-oxide-[protein] + [thioredoxin]-dithiol. The protein is Peptide methionine sulfoxide reductase MsrB of Salmonella arizonae (strain ATCC BAA-731 / CDC346-86 / RSK2980).